We begin with the raw amino-acid sequence, 455 residues long: MTQPLHVIILAAGAGKRMKSVLPKVLQPIAGQPMLAHVIDAARELQPAAIHVVHGHGGEAVRQYFAGQPDLQWAEQAQQLGTGHAVAQAMPQVPDLAQVLVLYGDVPLIRAQTLRDLLAQPGRLAVLVADVDDPTGYGRVLRDAEGKVGAIIEQKDATDDQLRVRTINTGIIAAESTALRRWLSQLSNSNAQGEYYLTDVFAFAAHEYTPAEMALVADAQEAEGANDPWQLSQLERAWQRRAVRALCAQGARVRDPARLDIRGTVTVGSDVLIDVDVVLEGKVVLGDGVTVGPFNRLKDVNLGPGTDVRAHCDLEGVVTEGAAQIGPFARLRPGTVLADGVHVGNFVETKKVTLGVGSKANHLTYLGDAVIGSKVNIGAGTITCNYDGVNKSTTTIGDNAFIGSNSSLVAPVTIGDGATIAAGSVITRNAPDGKLTLARARQETIDGWKRPLKKS.

Residues 1–228 (MTQPLHVIIL…AQEAEGANDP (228 aa)) are pyrophosphorylase. UDP-N-acetyl-alpha-D-glucosamine is bound by residues 10 to 13 (LAAG), Lys24, Gln76, 81 to 82 (GT), 103 to 105 (YGD), Gly138, Glu153, Asn168, and Asn226. Asp105 lines the Mg(2+) pocket. A Mg(2+)-binding site is contributed by Asn226. The tract at residues 229–249 (WQLSQLERAWQRRAVRALCAQ) is linker. The N-acetyltransferase stretch occupies residues 250–455 (GARVRDPARL…DGWKRPLKKS (206 aa)). Positions 332 and 350 each coordinate UDP-N-acetyl-alpha-D-glucosamine. His362 acts as the Proton acceptor in catalysis. UDP-N-acetyl-alpha-D-glucosamine is bound by residues Tyr365 and Asn376. Residues Ala379, 385 to 386 (NY), Ser404, Ala422, and Arg439 each bind acetyl-CoA.

In the N-terminal section; belongs to the N-acetylglucosamine-1-phosphate uridyltransferase family. This sequence in the C-terminal section; belongs to the transferase hexapeptide repeat family. In terms of assembly, homotrimer. Requires Mg(2+) as cofactor.

It is found in the cytoplasm. It catalyses the reaction alpha-D-glucosamine 1-phosphate + acetyl-CoA = N-acetyl-alpha-D-glucosamine 1-phosphate + CoA + H(+). The catalysed reaction is N-acetyl-alpha-D-glucosamine 1-phosphate + UTP + H(+) = UDP-N-acetyl-alpha-D-glucosamine + diphosphate. It functions in the pathway nucleotide-sugar biosynthesis; UDP-N-acetyl-alpha-D-glucosamine biosynthesis; N-acetyl-alpha-D-glucosamine 1-phosphate from alpha-D-glucosamine 6-phosphate (route II): step 2/2. Its pathway is nucleotide-sugar biosynthesis; UDP-N-acetyl-alpha-D-glucosamine biosynthesis; UDP-N-acetyl-alpha-D-glucosamine from N-acetyl-alpha-D-glucosamine 1-phosphate: step 1/1. The protein operates within bacterial outer membrane biogenesis; LPS lipid A biosynthesis. Its function is as follows. Catalyzes the last two sequential reactions in the de novo biosynthetic pathway for UDP-N-acetylglucosamine (UDP-GlcNAc). The C-terminal domain catalyzes the transfer of acetyl group from acetyl coenzyme A to glucosamine-1-phosphate (GlcN-1-P) to produce N-acetylglucosamine-1-phosphate (GlcNAc-1-P), which is converted into UDP-GlcNAc by the transfer of uridine 5-monophosphate (from uridine 5-triphosphate), a reaction catalyzed by the N-terminal domain. The polypeptide is Bifunctional protein GlmU (Stenotrophomonas maltophilia (strain K279a)).